A 2442-amino-acid polypeptide reads, in one-letter code: Piezo-type mechanosensitive ion channel component 1 (2442 aa).

The Extracellular segment spans residues 1-5; it reads MTVPP. The helical transmembrane segment at 6–26 threads the bilayer; the sequence is LLKSCVVKLLLPAALLAAAII. Position 27 (Arg-27) is a topological domain, cytoplasmic. The helical transmembrane segment at 28–48 threads the bilayer; that stretch reads PSFLSIGYVLLALVSAVLPPI. The Extracellular portion of the chain corresponds to 49 to 56; it reads RKSLALPK. The helical transmembrane segment at 57 to 77 threads the bilayer; the sequence is LVGTFVIITFLFCLAVALGVG. The Cytoplasmic portion of the chain corresponds to 78-122; it reads SYQISEQVVHKNDRTYICNRSDTTLFRSIGLVRFHPTGTFESTRA. A helical membrane pass occupies residues 123 to 143; that stretch reads FLPEIIATSAALLTIIIVMFL. The Extracellular portion of the chain corresponds to 144 to 173; the sequence is SHRDEQLDVVGDVVTVRSESGREQRRQRKL. A helical membrane pass occupies residues 174–196; it reads AAIMWSAIGNSLRRLTNFVLFLF. Residues 197–198 lie on the Cytoplasmic side of the membrane; that stretch reads TA. Residues 199 to 219 form a helical membrane-spanning segment; the sequence is YVGIVKPSLSNSIYFLAFLFI. The Extracellular segment spans residues 220-239; the sequence is STWWSTYTPLRHGVYNQIKK. Residues 240–260 traverse the membrane as a helical segment; the sequence is FLIFYSALHFLVLYTYQIPIV. Residues 261 to 303 are Cytoplasmic-facing; it reads HHSWLPTGSFLPRLFGLTVLMDSSCPEWWKFPFVAPDFNDDDL. The helical transmembrane segment at 304 to 324 threads the bilayer; the sequence is IMKWPLYANPIVVLVFFYLTV. Over 325–454 the chain is Extracellular; it reads AQYKFTRNGS…GDKESAASKG (130 aa). N-linked (GlcNAc...) asparagine glycans are attached at residues Asn-332, Asn-392, and Asn-440. Positions 389–417 are disordered; that stretch reads LLSNASSSANDDEQGRARSRSPLRNGEEQ. The helical transmembrane segment at 455–475 threads the bilayer; the sequence is MIAVMTFVIFHSYSIALTAMM. The Cytoplasmic segment spans residues 476–478; sequence TWA. The helical transmembrane segment at 479–499 threads the bilayer; the sequence is LLYHSIFGLILLILTCILWIF. Residues 500 to 506 are Extracellular-facing; the sequence is RDTRKSS. A helical transmembrane segment spans residues 507-527; that stretch reads FAMAPIILMYIEFLLILQYFL. At 528 to 552 the chain is on the cytoplasmic side; the sequence is SMDIHAEIGDPAWMNFVGIEWTTLP. The chain crosses the membrane as a helical span at residues 553–573; that stretch reads VHAVIILCVQTLLTLPVFLLL. The Extracellular portion of the chain corresponds to 574–633; that stretch reads RLARREKFYESLSDYERQRRINSYGTFGASKTGAGGVAVAKFQDPKSRKFAAFVEYLSNK. A helical transmembrane segment spans residues 634–654; that stretch reads VSVYFIFVVSVVLLVVSTCFA. Residues 655-656 are Cytoplasmic-facing; that stretch reads PN. Residues 657–677 form a helical membrane-spanning segment; the sequence is FYNILFFALWALNLIYLKFSF. Residues 678-683 are Extracellular-facing; that stretch reads RLYRGL. The chain crosses the membrane as a helical span at residues 684 to 704; the sequence is AYAFWLTLTFYTSIVIIALYI. Over 705–739 the chain is Cytoplasmic; that stretch reads YQFPGVSQWIIRNTSLSQEWLNAIGLVDFRAIGES. A helical transmembrane segment spans residues 740 to 760; sequence GALFLQLLAPIALFVVTMLQL. Over 761-832 the chain is Extracellular; that stretch reads KFFHGPWSRA…WRFFEVHISK (72 aa). The tract at residues 768-798 is disordered; it reads SRATSPRRAENDPPTSTTEAAAVASTSGTQG. The span at 782 to 794 shows a compositional bias: low complexity; it reads TSTTEAAAVASTS. N-linked (GlcNAc...) asparagine glycosylation occurs at Asn-816. A helical membrane pass occupies residues 833-853; sequence IVFVIIAIFIANNINALYIPL. Topologically, residues 854 to 874 are cytoplasmic; it reads VILLSLAICLPSAADGIFSLF. A helical membrane pass occupies residues 875 to 895; it reads MCAYLFLVALSKMIYQLDIVP. Residues 896–931 lie on the Extracellular side of the membrane; sequence ELSQIDRGVGADNCSHGNISMPEWFGLKKEVEGTEP. Residues Asn-908 and Asn-913 are each glycosylated (N-linked (GlcNAc...) asparagine). A helical membrane pass occupies residues 932-952; that stretch reads IYMLFGVIVSIIALAFQSIVI. Over 953-990 the chain is Cytoplasmic; that stretch reads YRQRHYRASLGLPESMRAKVFPDFHHSHFDRSLKNAIQ. The chain crosses the membrane as a helical span at residues 991–1011; that stretch reads FLIDYGFYKFGLEITMIAIGI. Asp-1012 is a topological domain (extracellular). A helical transmembrane segment spans residues 1013-1033; the sequence is IFNRMDALAAIQCFWLVLFAL. The Cytoplasmic segment spans residues 1034 to 1041; sequence NKRVFVRR. A helical transmembrane segment spans residues 1042 to 1062; sequence IWVFYVIYMAILYPLQFFSYV. The Extracellular segment spans residues 1063-1096; that stretch reads GLPPDSCIEYPWSYWIPSYSDDARFNLSYLLNLS. Residues Asn-1088 and Asn-1094 are each glycosylated (N-linked (GlcNAc...) asparagine). Residues 1097 to 1117 form a helical membrane-spanning segment; it reads IYGVNWPSAYLIGDFFVLLLA. Residues 1118–1160 lie on the Cytoplasmic side of the membrane; that stretch reads SCQLAVFRREGEDNDSIYNDGNFVIKPENPQYDFIDTKKSYVD. Residues 1161–1181 traverse the membrane as a helical segment; sequence YFKSFVFHYGHWITLMSTLAA. The Extracellular portion of the chain corresponds to 1182–1187; sequence GIAGTS. The chain crosses the membrane as a helical span at residues 1188-1210; that stretch reads LFALGYIIFTLTMLWSGNNLYVM. At 1211–1231 the chain is on the cytoplasmic side; sequence NSTLRSFEHTLKRWNALLGYT. Residues 1232–1252 form a helical membrane-spanning segment; sequence LFTITMKVCLQIFGCVFLSWF. Topologically, residues 1253–1299 are extracellular; the sequence is DQSGGWGKTLCIVRQLFSITCVNNECHVLKELEDFSKACAVETKEGN. The helical transmembrane segment at 1300–1320 threads the bilayer; sequence IGFDVIALSFLVFQIRIFHSW. The Cytoplasmic segment spans residues 1321–1615; that stretch reads YFQHCMVEYR…VVNCIGAHTD (295 aa). The interval 1463–1502 is disordered; that stretch reads DTIKDPDSRALIAVSEPEARKPGGTEETDGDEDEDNKDSK. A compositionally biased stretch (acidic residues) spans 1488–1498; it reads EETDGDEDEDN. A helical membrane pass occupies residues 1616-1636; the sequence is ILCYFFAIMTQVMTGGLITLP. At 1637–1654 the chain is on the extracellular side; it reads LPLMSLFWGNLSNPRPSK. Asn-1646 carries an N-linked (GlcNAc...) asparagine glycan. The helical transmembrane segment at 1655–1675 threads the bilayer; it reads FFWVTMITYTECVIVIKFVCQ. Residues 1676 to 1706 lie on the Cytoplasmic side of the membrane; the sequence is FAFMPYNSITWRTEHQMDPMSLDKLFGVSQR. A helical membrane pass occupies residues 1707 to 1727; the sequence is DSFALWDIVLLFSLFFHRYML. Over 1728–1833 the chain is Extracellular; that stretch reads RKLGLWKDAN…KFRYIRDLYP (106 aa). The N-linked (GlcNAc...) asparagine glycan is linked to Asn-1737. A helical transmembrane segment spans residues 1834-1854; the sequence is IMFGIDVICFLIMTFGYSAFG. Residues 1855–1866 lie on the Cytoplasmic side of the membrane; it reads EGGSGNVLDDVK. The chain crosses the membrane as a helical span at residues 1867 to 1887; the sequence is ASRIPVTLVVMLVGMTLAIII. Residues 1888–1900 are Extracellular-facing; it reads DRALYLRKSVVGK. The chain crosses the membrane as a helical span at residues 1901-1921; sequence LIYQVLMIAFLHIWVFLVLPN. The Cytoplasmic segment spans residues 1922-1930; sequence MTRRSAISN. A helical transmembrane segment spans residues 1931–1951; the sequence is HVAQALYVIKSCYFLVSAWQI. Residues 1952-2046 lie on the Extracellular side of the membrane; that stretch reads RNGYPELCIG…KGKLVKYMMG (95 aa). The chain crosses the membrane as a helical span at residues 2047–2067; the sequence is FPIIIGVVIFIFSPLLLWSLL. Over 2068–2346 the chain is Cytoplasmic; the sequence is NQIGTISMPE…VGFIDRAFPS (279 aa). Residues 2347 to 2367 traverse the membrane as a helical segment; it reads FLAKVFKGGVIAVYLSVILVV. Residues 2368–2442 lie on the Extracellular side of the membrane; the sequence is GRGLVRGIFT…WTRMSKKKQE (75 aa).

Belongs to the PIEZO (TC 1.A.75) family. Expressed in the pharyngeal-intestinal and spermathecal-uterine valves and in multiple reproductive tissues including the germline, somatic oviduct, and spermatheca. During reproduction, it is expressed in sheath cells, sperm, both spermathecal valves and the spermathecal bag cells.

It is found in the cell membrane. In terms of biological role, pore-forming subunit of a mechanosensitive non-specific cation channel. Generates currents characterized by a linear current-voltage relationship. Plays a role in reproduction by positively regulating inter-tissue signaling to promote oocyte maturation, ovulation and fertilization, and sperm navigation from and to the spermatheca. May play a role in regulating cytosolic and endoplasmic reticulum calcium ion release. The sequence is that of Piezo-type mechanosensitive ion channel component 1 from Caenorhabditis elegans.